The primary structure comprises 563 residues: Light-independent protochlorophyllide reductase subunit B (563 aa).

D36 contacts [4Fe-4S] cluster. D349 acts as the Proton donor in catalysis. A substrate-binding site is contributed by 484 to 485; it reads GM.

The protein belongs to the ChlB/BchB/BchZ family. As to quaternary structure, protochlorophyllide reductase is composed of three subunits; ChlL, ChlN and ChlB. Forms a heterotetramer of two ChlB and two ChlN subunits. It depends on [4Fe-4S] cluster as a cofactor.

It localises to the plastid. Its subcellular location is the chloroplast. It carries out the reaction chlorophyllide a + oxidized 2[4Fe-4S]-[ferredoxin] + 2 ADP + 2 phosphate = protochlorophyllide a + reduced 2[4Fe-4S]-[ferredoxin] + 2 ATP + 2 H2O. It participates in porphyrin-containing compound metabolism; chlorophyll biosynthesis (light-independent). In terms of biological role, component of the dark-operative protochlorophyllide reductase (DPOR) that uses Mg-ATP and reduced ferredoxin to reduce ring D of protochlorophyllide (Pchlide) to form chlorophyllide a (Chlide). This reaction is light-independent. The NB-protein (ChlN-ChlB) is the catalytic component of the complex. The protein is Light-independent protochlorophyllide reductase subunit B of Chlamydomonas moewusii (Chlamydomonas eugametos).